The sequence spans 43 residues: Delta-actitoxin-Bca1a (43 aa).

3 cysteine pairs are disulfide-bonded: C1-C41, C3-C31, and C24-C42.

It is found in the secreted. It localises to the nematocyst. Its function is as follows. Binds specifically to voltage-gated sodium channels (Nav), thereby delaying their inactivation during signal transduction. Thus it strongly stimulates mammalian cardiac muscle contraction. This chain is Delta-actitoxin-Bca1a, found in Bunodosoma capense (Knobbly sea anemone).